Reading from the N-terminus, the 918-residue chain is Isoleucine--tRNA ligase (918 aa).

Residues 57-67 carry the 'HIGH' region motif; it reads PYANGHIHIGT. Residue Glu-552 participates in L-isoleucyl-5'-AMP binding. Positions 593–597 match the 'KMSKS' region motif; sequence KMSKS. Lys-596 contacts ATP. Zn(2+) is bound by residues Cys-886, Cys-889, Cys-906, and Cys-909.

It belongs to the class-I aminoacyl-tRNA synthetase family. IleS type 1 subfamily. As to quaternary structure, monomer. The cofactor is Zn(2+).

The protein localises to the cytoplasm. It carries out the reaction tRNA(Ile) + L-isoleucine + ATP = L-isoleucyl-tRNA(Ile) + AMP + diphosphate. Its function is as follows. Catalyzes the attachment of isoleucine to tRNA(Ile). As IleRS can inadvertently accommodate and process structurally similar amino acids such as valine, to avoid such errors it has two additional distinct tRNA(Ile)-dependent editing activities. One activity is designated as 'pretransfer' editing and involves the hydrolysis of activated Val-AMP. The other activity is designated 'posttransfer' editing and involves deacylation of mischarged Val-tRNA(Ile). The protein is Isoleucine--tRNA ligase of Thermotoga neapolitana (strain ATCC 49049 / DSM 4359 / NBRC 107923 / NS-E).